A 170-amino-acid chain; its full sequence is MFPMVTGFINYGQQTIRAARYIGQSFMITLSHANRLPVTIQYPYEKLITSERFRGRIHFEFDKCIACEVCVRACPIDLPVVDWKLETDIRKKRLLNYSIDFGICIFCGNCVEYCPTNCLSMTEEYELSTYDRHELNYNQIALGRLPISITDDYTIRTILNSPQTKEKACD.

4Fe-4S ferredoxin-type domains are found at residues 55–84 (GRIH…VDWK) and 95–124 (LNYS…MTEE). [4Fe-4S] cluster-binding residues include Cys-64, Cys-67, Cys-70, Cys-74, Cys-104, Cys-107, Cys-110, and Cys-114.

This sequence belongs to the complex I 23 kDa subunit family. NDH is composed of at least 16 different subunits, 5 of which are encoded in the nucleus. It depends on [4Fe-4S] cluster as a cofactor.

The protein localises to the plastid. It is found in the chloroplast thylakoid membrane. It carries out the reaction a plastoquinone + NADH + (n+1) H(+)(in) = a plastoquinol + NAD(+) + n H(+)(out). It catalyses the reaction a plastoquinone + NADPH + (n+1) H(+)(in) = a plastoquinol + NADP(+) + n H(+)(out). NDH shuttles electrons from NAD(P)H:plastoquinone, via FMN and iron-sulfur (Fe-S) centers, to quinones in the photosynthetic chain and possibly in a chloroplast respiratory chain. The immediate electron acceptor for the enzyme in this species is believed to be plastoquinone. Couples the redox reaction to proton translocation, and thus conserves the redox energy in a proton gradient. The chain is NAD(P)H-quinone oxidoreductase subunit I, chloroplastic from Spinacia oleracea (Spinach).